The following is a 201-amino-acid chain: Probable quinol oxidase subunit 3 (201 aa).

Transmembrane regions (helical) follow at residues 20 to 40 (LGFW…FATL), 62 to 82 (LILI…IAIY), 91 to 111 (LMMF…GFEI), 133 to 153 (FFIL…WVIC), and 172 to 192 (FIVS…FTAV).

Belongs to the cytochrome c oxidase subunit 3 family.

The protein resides in the cell membrane. The enzyme catalyses 2 a quinol + O2 = 2 a quinone + 2 H2O. Its function is as follows. Catalyzes quinol oxidation with the concomitant reduction of oxygen to water. This Staphylococcus epidermidis (strain ATCC 35984 / DSM 28319 / BCRC 17069 / CCUG 31568 / BM 3577 / RP62A) protein is Probable quinol oxidase subunit 3 (qoxC).